The sequence spans 422 residues: 3-phosphoshikimate 1-carboxyvinyltransferase (422 aa).

Residues K21, S22, and R26 each coordinate 3-phosphoshikimate. K21 contacts phosphoenolpyruvate. G93 and R121 together coordinate phosphoenolpyruvate. 6 residues coordinate 3-phosphoshikimate: S166, S167, Q168, S194, D310, and K337. Q168 serves as a coordination point for phosphoenolpyruvate. D310 (proton acceptor) is an active-site residue. Phosphoenolpyruvate-binding residues include R341, R382, and K407.

The protein belongs to the EPSP synthase family. Monomer.

The protein localises to the cytoplasm. The catalysed reaction is 3-phosphoshikimate + phosphoenolpyruvate = 5-O-(1-carboxyvinyl)-3-phosphoshikimate + phosphate. The protein operates within metabolic intermediate biosynthesis; chorismate biosynthesis. Functionally, catalyzes the transfer of the enolpyruvyl moiety of phosphoenolpyruvate (PEP) to the 5-hydroxyl of shikimate-3-phosphate (S3P) to produce enolpyruvyl shikimate-3-phosphate and inorganic phosphate. The polypeptide is 3-phosphoshikimate 1-carboxyvinyltransferase (Methanoculleus marisnigri (strain ATCC 35101 / DSM 1498 / JR1)).